The primary structure comprises 772 residues: Serine/threonine-protein kinase tousled-like 2 (772 aa).

The disordered stretch occupies residues 24–126; sequence GVSKGPLNSE…SNPLPRRVEQ (103 aa). Over residues 29 to 44 the composition is skewed to polar residues; the sequence is PLNSESSNQSLCSVGS. A compositionally biased stretch (basic and acidic residues) spans 46 to 61; it reads SDKEVETPEKKQNDQR. Serine 73, serine 94, serine 99, serine 115, serine 117, and serine 134 each carry phosphoserine. Positions 180-208 are disordered; that stretch reads QNSPSSTGSGNTEHSCSSQKQISIQHRQT. The required for interaction with TLK1 and DYNLL1/LC8 stretch occupies residues 225–276; sequence NSDLEKKEGRIDDLLRANCDLRRQIDEQQKMLEKYKERLNRCVTMSKKLLIE. 2 coiled-coil regions span residues 225–276 and 317–347; these read NSDL…LLIE and AFQN…KRKP. Residues 342-385 form a disordered region; that stretch reads LAKRKPPAMGQAPPATNEQKQRKSKTNGAENETPSSGNTELKDT. Polar residues predominate over residues 367–380; sequence TNGAENETPSSGNT. The stretch at 403–451 forms a coiled coil; it reads HEQEEIFKLRLGHLKKEEAEIQAELERLERVRNLHIRELKRIHNEDNSQ. Positions 462-741 constitute a Protein kinase domain; that stretch reads YLLLHLLGRG…VQQLACDPYL (280 aa). Residues 468–476 and lysine 491 each bind ATP; that span reads LGRGGFSEV. The active-site Proton acceptor is the aspartate 592. The residue at position 750 (serine 750) is a Phosphoserine; by CHEK1.

Belongs to the protein kinase superfamily. Ser/Thr protein kinase family. Monomer. May form homodimers; homodimerization may enhance autophosphoylation and enzymatic activity. Heterodimer with TLK1. Interacts with YWHAZ; association with 14-3-3 proteins such as YWHAZ regulates subcellular location. May also interact with FEZ1/LZTS1 and FEZ2. Interacts with CHD7 and CHD8. Interacts with DYNLL1/LC8. The cofactor is Mg(2+). Post-translationally, phosphorylated at Ser-750, probably by CHEK1. Autophosphorylated; phosphorylation promotes the assembly of higher order oligomers and enzymatic activity. In terms of tissue distribution, detected in placenta, fetal liver, kidney, pancreas, heart and skeletal muscle. Highly expressed in testis. Detected in spleen, thymus, colon, ovary, small intestine, prostate and peripheral blood leukocytes. Almost undetectable in liver and lung.

Its subcellular location is the nucleus. It localises to the nucleoplasm. The protein localises to the cytoplasm. The protein resides in the perinuclear region. It is found in the cytoskeleton. The catalysed reaction is L-seryl-[protein] + ATP = O-phospho-L-seryl-[protein] + ADP + H(+). It carries out the reaction L-threonyl-[protein] + ATP = O-phospho-L-threonyl-[protein] + ADP + H(+). With respect to regulation, cell cycle-regulated, with maximal activity in the S-phase. Rapidly and transiently inhibited by phosphorylation following the generation of DNA double-stranded breaks during S-phase, probably by CHEK1, possibly at Ser-750. This inhibition is cell cycle checkpoint- and ATM-dependent. Its function is as follows. Serine/threonine-protein kinase involved in the process of chromatin assembly and probably also DNA replication, transcription, repair, and chromosome segregation. Phosphorylates the chromatin assembly factors ASF1A and ASF1B. Phosphorylation of ASF1A prevents its proteasome-mediated degradation, thereby enhancing chromatin assembly. Negative regulator of amino acid starvation-induced autophagy. The polypeptide is Serine/threonine-protein kinase tousled-like 2 (Homo sapiens (Human)).